The following is a 221-amino-acid chain: Cytidylate kinase 1 (221 aa).

Residue 7 to 15 (GPSASGKSS) coordinates ATP.

It belongs to the cytidylate kinase family. Type 1 subfamily.

The protein resides in the cytoplasm. The catalysed reaction is CMP + ATP = CDP + ADP. The enzyme catalyses dCMP + ATP = dCDP + ADP. The sequence is that of Cytidylate kinase 1 from Borreliella burgdorferi (strain ATCC 35210 / DSM 4680 / CIP 102532 / B31) (Borrelia burgdorferi).